A 163-amino-acid chain; its full sequence is Photosystem II extrinsic protein V (163 aa).

A signal peptide spans 1–26 (MFKKSYQFFALVLFSIFNVLVTSASA). 4 residues coordinate heme c: Cys-63, Cys-66, His-67, and His-118.

The protein belongs to the cytochrome c family. PsbV subfamily. In terms of assembly, PSII is composed of 1 copy each of membrane proteins PsbA, PsbB, PsbC, PsbD, PsbE, PsbF, PsbH, PsbI, PsbJ, PsbK, PsbL, PsbM, PsbT, PsbY, PsbZ, Psb30/Ycf12, at least 3 peripheral proteins of the oxygen-evolving complex and a large number of cofactors. It forms dimeric complexes. Requires heme c as cofactor.

Its subcellular location is the plastid. It localises to the chloroplast thylakoid membrane. Functionally, one of the extrinsic, lumenal subunits of photosystem II (PSII). PSII is a light-driven water plastoquinone oxidoreductase, using light energy to abstract electrons from H(2)O, generating a proton gradient subsequently used for ATP formation. The extrinsic proteins stabilize the structure of photosystem II oxygen-evolving complex (OEC), the ion environment of oxygen evolution and protect the OEC against heat-induced inactivation. The polypeptide is Photosystem II extrinsic protein V (Trieres chinensis (Marine centric diatom)).